A 478-amino-acid chain; its full sequence is Aspartyl/glutamyl-tRNA(Asn/Gln) amidotransferase subunit B 2 (478 aa).

Belongs to the GatB/GatE family. GatB subfamily. As to quaternary structure, heterotrimer of A, B and C subunits.

It carries out the reaction L-glutamyl-tRNA(Gln) + L-glutamine + ATP + H2O = L-glutaminyl-tRNA(Gln) + L-glutamate + ADP + phosphate + H(+). The enzyme catalyses L-aspartyl-tRNA(Asn) + L-glutamine + ATP + H2O = L-asparaginyl-tRNA(Asn) + L-glutamate + ADP + phosphate + 2 H(+). Allows the formation of correctly charged Asn-tRNA(Asn) or Gln-tRNA(Gln) through the transamidation of misacylated Asp-tRNA(Asn) or Glu-tRNA(Gln) in organisms which lack either or both of asparaginyl-tRNA or glutaminyl-tRNA synthetases. The reaction takes place in the presence of glutamine and ATP through an activated phospho-Asp-tRNA(Asn) or phospho-Glu-tRNA(Gln). The protein is Aspartyl/glutamyl-tRNA(Asn/Gln) amidotransferase subunit B 2 (gatB2) of Clostridium acetobutylicum (strain ATCC 824 / DSM 792 / JCM 1419 / IAM 19013 / LMG 5710 / NBRC 13948 / NRRL B-527 / VKM B-1787 / 2291 / W).